We begin with the raw amino-acid sequence, 164 residues long: uncharacterized protein (164 aa).

Over residues 1–17 the composition is skewed to polar residues; that stretch reads MNSRVPATQSWFSSHLP. Residues 1–48 form a disordered region; it reads MNSRVPATQSWFSSHLPTTEPDLEPATAAEGSTTETATLSPETTSFND. The segment covering 24–45 has biased composition (low complexity); the sequence is EPATAAEGSTTETATLSPETTS. A helical transmembrane segment spans residues 64–84; the sequence is MLLSFGIITVIGLAVAMVLYI. Residues 106-130 adopt a coiled-coil conformation; sequence TEEQDELEQELLEHGRDAASMQAAA.

The protein resides in the membrane. This is an uncharacterized protein from Mus musculus (Mouse).